Consider the following 358-residue polypeptide: Microbial Terpene synthase-like protein 13 (358 aa).

This sequence belongs to the terpene synthase family.

Its function is as follows. No terpene synthase activity detected in vitro. This is Microbial Terpene synthase-like protein 13 from Selaginella moellendorffii (Spikemoss).